Reading from the N-terminus, the 229-residue chain is Lipoprotein-releasing system ATP-binding protein LolD (229 aa).

The region spanning 9–228 (HGLRKIYREA…QDGNLVQVEV (220 aa)) is the ABC transporter domain. An ATP-binding site is contributed by 42–49 (GSSGSGKS).

This sequence belongs to the ABC transporter superfamily. Lipoprotein translocase (TC 3.A.1.125) family. As to quaternary structure, the complex is composed of two ATP-binding proteins (LolD) and two transmembrane proteins (LolC and LolE).

Its subcellular location is the cell inner membrane. Functionally, part of the ABC transporter complex LolCDE involved in the translocation of mature outer membrane-directed lipoproteins, from the inner membrane to the periplasmic chaperone, LolA. Responsible for the formation of the LolA-lipoprotein complex in an ATP-dependent manner. The protein is Lipoprotein-releasing system ATP-binding protein LolD of Photobacterium profundum (strain SS9).